We begin with the raw amino-acid sequence, 238 residues long: Ribonuclease PH (238 aa).

Residues Arg86 and 124 to 126 each bind phosphate; that span reads GTR.

Belongs to the RNase PH family. Homohexameric ring arranged as a trimer of dimers.

It catalyses the reaction tRNA(n+1) + phosphate = tRNA(n) + a ribonucleoside 5'-diphosphate. In terms of biological role, phosphorolytic 3'-5' exoribonuclease that plays an important role in tRNA 3'-end maturation. Removes nucleotide residues following the 3'-CCA terminus of tRNAs; can also add nucleotides to the ends of RNA molecules by using nucleoside diphosphates as substrates, but this may not be physiologically important. Probably plays a role in initiation of 16S rRNA degradation (leading to ribosome degradation) during starvation. The sequence is that of Ribonuclease PH from Escherichia coli O6:K15:H31 (strain 536 / UPEC).